We begin with the raw amino-acid sequence, 104 residues long: Transcription and mRNA export factor ENY2 (104 aa).

Residues 1–14 are compositionally biased toward basic and acidic residues; it reads MADYGSDKKSRDNQ. The tract at residues 1–22 is disordered; sequence MADYGSDKKSRDNQMRSAINQQ.

It belongs to the ENY2 family. As to quaternary structure, component of the nuclear pore complex (NPC)-associated TREX-2 complex (transcription and export complex 2). Component of the SAGA transcription coactivator-HAT complex. Within the SAGA complex, participates in a subcomplex of SAGA called the DUB module (deubiquitination module).

It localises to the nucleus. Its subcellular location is the nucleoplasm. Functionally, involved in mRNA export coupled transcription activation by association with both the TREX-2 and the SAGA complexes. The transcription regulatory histone acetylation (HAT) complex SAGA is a multiprotein complex that activates transcription by remodeling chromatin and mediating histone acetylation and deubiquitination. Within the SAGA complex, participates in a subcomplex that specifically deubiquitinates histones. The SAGA complex is recruited to specific gene promoters by activators, where it is required for transcription. The TREX-2 complex functions in docking export-competent ribonucleoprotein particles (mRNPs) to the nuclear entrance of the nuclear pore complex (nuclear basket). TREX-2 participates in mRNA export and accurate chromatin positioning in the nucleus by tethering genes to the nuclear periphery. This Ciona intestinalis (Transparent sea squirt) protein is Transcription and mRNA export factor ENY2.